A 794-amino-acid chain; its full sequence is Putative neurotrophin receptor LTRK 1 (794 aa).

The first 33 residues, 1 to 33 (MRGPRRFRLWTRANVLTVISILTSILSGAGCSP), serve as a signal peptide directing secretion. Residues 34-419 (LSQLPSDNPA…PTEDFGPQTQ (386 aa)) are Extracellular-facing. Residues 36–102 (QLPSDNPAHV…DQVPGDASRN (67 aa)) form a disordered region. N-linked (GlcNAc...) asparagine glycans are attached at residues Asn64, Asn102, and Asn128. LRR repeat units follow at residues 181–202 (CLKH…AFKT) and 205–226 (SLET…LLRT). An LRRCT domain is found at 237–280 (NALTCSCTNLWLRSVDVAADRSEMTCSTRDGVSKMKMTQFKCEP). N-linked (GlcNAc...) asparagine glycosylation is found at Asn288 and Asn374. The chain crosses the membrane as a helical span at residues 420 to 440 (VILPVVGVVILLISAVFIIYL). Residues 441–794 (CQRAKHRSHA…GDPVYIDIIA (354 aa)) lie on the Cytoplasmic side of the membrane. Residues 504–775 (ILLMRVIGEG…PQDRLTMKDI (272 aa)) enclose the Protein kinase domain. ATP-binding positions include 510–518 (IGEGAFGRV) and Lys538. Catalysis depends on Asp647, which acts as the Proton acceptor. Phosphotyrosine; by autocatalysis occurs at positions 673, 677, 678, and 789.

This sequence belongs to the protein kinase superfamily. Tyr protein kinase family. Insulin receptor subfamily. In terms of tissue distribution, expression is confined to the central nervous system and its associated endocrine tissues.

Its subcellular location is the membrane. The catalysed reaction is L-tyrosyl-[protein] + ATP = O-phospho-L-tyrosyl-[protein] + ADP + H(+). Its function is as follows. May bind an endogenous invertebrate neurotrophin. Binds human NT-3, but not NGF or BDNF. The chain is Putative neurotrophin receptor LTRK 1 from Lymnaea stagnalis (Great pond snail).